Consider the following 133-residue polypeptide: Cell division protein FtsL (133 aa).

Residues 1 to 45 lie on the Cytoplasmic side of the membrane; the sequence is MAVEKVYQPYDEQVYNSIPKQQPQTKPEKKTVSRKVVVQLTKFEK. The chain crosses the membrane as a helical span at residues 46 to 65; sequence VLYITLITVIAMLSIYMLSL. Residues 66–133 are Extracellular-facing; it reads KMDAYDTRGK…VVRSNGEAKN (68 aa).

The protein belongs to the FtsL family.

It localises to the cell membrane. Functionally, essential cell division protein. The chain is Cell division protein FtsL from Staphylococcus aureus (strain NCTC 8325 / PS 47).